The chain runs to 306 residues: MESRLKPGLIVLCGPTAAGKSSLAIAIAQRLGSPILSADSRLVYRDFNIGTAKPTPAEQQQVPHYLMDLCDPRQVFTVGDYQDCAVPLIQQLQEKGMLPLLVGGTGLYIKAIVNGLRFPRIAPQPKLRSQLQALGQPLCHALLQRVDPVAGDRIHVNDRVRTLRALEVFYVSGDRLTDLQQEQPPSYPILQIGLDSDRLEARIQQRTQQMLTSGFVEEVQGLCDRYGSDLPLLNTLGYRQVCAFLQGSLSRSELPEQIVLQTRQYAKQQRTWFRADSSIQWIDAEASNRLERALDLIERFRKSEGV.

Position 14-21 (14-21) interacts with ATP; sequence GPTAAGKS. 16-21 is a substrate binding site; sequence TAAGKS. The interval 39–42 is interaction with substrate tRNA; the sequence is DSRL.

It belongs to the IPP transferase family. As to quaternary structure, monomer. It depends on Mg(2+) as a cofactor.

It carries out the reaction adenosine(37) in tRNA + dimethylallyl diphosphate = N(6)-dimethylallyladenosine(37) in tRNA + diphosphate. Functionally, catalyzes the transfer of a dimethylallyl group onto the adenine at position 37 in tRNAs that read codons beginning with uridine, leading to the formation of N6-(dimethylallyl)adenosine (i(6)A). The polypeptide is tRNA dimethylallyltransferase (Synechococcus elongatus (strain ATCC 33912 / PCC 7942 / FACHB-805) (Anacystis nidulans R2)).